The primary structure comprises 700 residues: Cap-specific mRNA (nucleoside-2'-O-)-methyltransferase 2 (700 aa).

The disordered stretch occupies residues 1–21 (MSFRSSPQGKPHPMTDYQSIR). The 213-residue stretch at 109–321 (EFVTVAWCKL…VYVICLNYNK (213 aa)) folds into the Adrift-type SAM-dependent 2'-O-MTase domain. K117 is an active-site residue. Residues G143, W164, and D234 each contribute to the S-adenosyl-L-methionine site. D234 is a catalytic residue. The active-site Proton acceptor is the K274.

Its subcellular location is the nucleus. The enzyme catalyses a 5'-end (N(7)-methyl 5'-triphosphoguanosine)-(2'-O-methyl-ribonucleoside)-(ribonucleotide) in mRNA + S-adenosyl-L-methionine = a 5'-end (N(7)-methyl 5'-triphosphoguanosine)-(2'-O-methyl-ribonucleoside)-(2'-O-methyl-ribonucleotide) in mRNA + S-adenosyl-L-homocysteine + H(+). Its function is as follows. Probable S-adenosyl-L-methionine-dependent methyltransferase that mediates mRNA cap2 2'-O-ribose methylation to the 5'-cap structure of mRNAs. May methylate the ribose of the second nucleotide of a m(7)GpppG-capped mRNA (cap0) to produce m(7)GpppRmpNm (cap2). Regulates expression of tracheal genes required for pathfinding on the segmental nerve. The chain is Cap-specific mRNA (nucleoside-2'-O-)-methyltransferase 2 (cmtr2) from Drosophila melanogaster (Fruit fly).